The sequence spans 429 residues: Citrate synthase, plasmid (429 aa).

Active-site residues include histidine 306 and aspartate 364.

Belongs to the citrate synthase family.

The enzyme catalyses oxaloacetate + acetyl-CoA + H2O = citrate + CoA + H(+). Its pathway is carbohydrate metabolism; tricarboxylic acid cycle; isocitrate from oxaloacetate: step 1/2. Its function is as follows. The exact function of the plasmid-encoded citrate synthase is not clear, it could help nodulation by allowing the bacteria to use citrate as a chelator of iron and calcium. This chain is Citrate synthase, plasmid (pcsA), found in Rhizobium tropici.